We begin with the raw amino-acid sequence, 242 residues long: DNA-directed RNA polymerase III subunit rpc5 (242 aa).

Disordered regions lie at residues 1–22 (MSFS…TEEQ) and 153–172 (LKAA…PRGP). Positions 155–172 (AAAGPSNSSSGTSTPRGP) are enriched in low complexity.

Component of the RNA polymerase III (Pol III) complex consisting of 17 subunits.

The protein resides in the cytoplasm. The protein localises to the nucleus. In terms of biological role, DNA-dependent RNA polymerase catalyzes the transcription of DNA into RNA using the four ribonucleoside triphosphates as substrates. Specific peripheric component of RNA polymerase III which synthesizes small RNAs, such as 5S rRNA and tRNAs. The RPC53/RPC4-RPC37/RPC5 subcomplex is required for terminator recognition and reinitiation. The polypeptide is DNA-directed RNA polymerase III subunit rpc5 (rpc37) (Schizosaccharomyces pombe (strain 972 / ATCC 24843) (Fission yeast)).